We begin with the raw amino-acid sequence, 500 residues long: Glycerol kinase (500 aa).

Residue Thr13 coordinates ADP. Residues Thr13, Thr14, and Ser15 each contribute to the ATP site. Position 13 (Thr13) interacts with sn-glycerol 3-phosphate. Arg17 contacts ADP. 4 residues coordinate sn-glycerol 3-phosphate: Arg83, Glu84, Tyr135, and Asp244. Residues Arg83, Glu84, Tyr135, Asp244, and Gln245 each coordinate glycerol. The ADP site is built by Thr266 and Gly309. Thr266, Gly309, Gln313, and Gly410 together coordinate ATP. Positions 410 and 414 each coordinate ADP.

The protein belongs to the FGGY kinase family.

The enzyme catalyses glycerol + ATP = sn-glycerol 3-phosphate + ADP + H(+). It participates in polyol metabolism; glycerol degradation via glycerol kinase pathway; sn-glycerol 3-phosphate from glycerol: step 1/1. With respect to regulation, inhibited by fructose 1,6-bisphosphate (FBP). Functionally, key enzyme in the regulation of glycerol uptake and metabolism. Catalyzes the phosphorylation of glycerol to yield sn-glycerol 3-phosphate. In Burkholderia ambifaria (strain ATCC BAA-244 / DSM 16087 / CCUG 44356 / LMG 19182 / AMMD) (Burkholderia cepacia (strain AMMD)), this protein is Glycerol kinase.